Here is a 285-residue protein sequence, read N- to C-terminus: Putative sugar uptake protein lmo0169 (285 aa).

10 helical membrane-spanning segments follow: residues 5-24, 31-48, 53-71, 84-106, 116-135, 151-173, 178-195, 207-226, 232-254, and 263-282; these read IALI…SKIG, IIGT…VFIF, YTAT…WSLG, VSKT…GVFA, LVLG…LTSY, IITL…WFDI, AILP…LFSI, WLNM…LLFS, IATG…ILFL, and LILV…MIGI.

It belongs to the GRP transporter (TC 2.A.7.5) family.

It localises to the cell membrane. In Listeria monocytogenes serovar 1/2a (strain ATCC BAA-679 / EGD-e), this protein is Putative sugar uptake protein lmo0169.